A 29-amino-acid polypeptide reads, in one-letter code: Cytochrome b6-f complex subunit 8 (29 aa).

The helical transmembrane segment at 3–23 threads the bilayer; it reads ILSLGWAALMTMFTFSLALTV.

This sequence belongs to the PetN family. The 4 large subunits of the cytochrome b6-f complex are cytochrome b6, subunit IV (17 kDa polypeptide, PetD), cytochrome f and the Rieske protein, while the 4 small subunits are PetG, PetL, PetM and PetN. The complex functions as a dimer.

The protein localises to the plastid. It is found in the chloroplast thylakoid membrane. Its function is as follows. Component of the cytochrome b6-f complex, which mediates electron transfer between photosystem II (PSII) and photosystem I (PSI), cyclic electron flow around PSI, and state transitions. The polypeptide is Cytochrome b6-f complex subunit 8 (Phaeodactylum tricornutum (strain CCAP 1055/1)).